A 474-amino-acid chain; its full sequence is Hepatocyte nuclear factor 4-alpha (474 aa).

The nuclear receptor DNA-binding region spans 57–132 (SALCAICGDR…AGMKKEAVQN (76 aa)). 2 NR C4-type zinc fingers span residues 60 to 80 (CAICGDRATGKHYGASSCDGC) and 96 to 120 (CRFSRQCVVDKDKRNQCRYCRLKKC). Ser-142 and Ser-143 each carry phosphoserine. Tyr-144 is subject to Phosphotyrosine. The 231-residue stretch at 147-377 (SSLPSINALL…NLLQEMLLGG (231 aa)) folds into the NR LBD domain. Thr-166 is modified (phosphothreonine). Ser-167 carries the post-translational modification Phosphoserine. Residues Lys-234 and Lys-307 each participate in a glycyl lysine isopeptide (Lys-Gly) (interchain with G-Cter in ubiquitin) cross-link. The residue at position 313 (Ser-313) is a Phosphoserine; by AMPK. Residues 368–376 (NLLQEMLLG) carry the 9aaTAD motif. The tract at residues 413-450 (SNGQMCEWPRPRGQAATPETPQPSPPSGSGSESYKLLP) is disordered. Phosphothreonine occurs at positions 429 and 432. Position 436 is a phosphoserine (Ser-436). Position 458 is an N6-acetyllysine (Lys-458).

It belongs to the nuclear hormone receptor family. NR2 subfamily. As to quaternary structure, homodimerization is required for HNF4-alpha to bind to its recognition site. Interacts with CLOCK, BMAL1 and PER1. Interacts with PER2. Interacts with CRY1 and CRY2. Interacts with NR0B2/SHP; the resulting heterodimer is transcriptionally inactive. Interacts with DDX3X; this interaction disrupts the interaction between HNF4 and NR0B2 that forms inactive heterodimers and enhances the formation of active HNF4 homodimers. Phosphorylated on tyrosine residue(s); phosphorylation is important for its DNA-binding activity. Phosphorylation may directly or indirectly play a regulatory role in the subnuclear distribution. Phosphorylation at Ser-313 by AMPK reduces the ability to form homodimers and bind DNA. In terms of processing, acetylation at Lys-458 lowers transcriptional activation by about two-fold. In terms of tissue distribution, expressed in the liver, pancreas and colon in a circadian manner.

The protein resides in the nucleus. Functionally, transcriptional regulator which controls the expression of hepatic genes during the transition of endodermal cells to hepatic progenitor cells, facilitatating the recruitment of RNA pol II to the promoters of target genes. Activates the transcription of CYP2C38. Represses the CLOCK-BMAL1 transcriptional activity and is essential for circadian rhythm maintenance and period regulation in the liver and colon cells. The protein is Hepatocyte nuclear factor 4-alpha (Hnf4a) of Mus musculus (Mouse).